A 384-amino-acid chain; its full sequence is S-adenosylmethionine synthase (384 aa).

Residue histidine 16 participates in ATP binding. Aspartate 18 provides a ligand contact to Mg(2+). Glutamate 44 is a K(+) binding site. L-methionine is bound by residues glutamate 57 and glutamine 100. The flexible loop stretch occupies residues 100–110 (QSADIAMGVDE). ATP-binding positions include 165–167 (DAK), aspartate 240, 246–247 (RK), alanine 263, and lysine 267. Aspartate 240 provides a ligand contact to L-methionine. Lysine 271 serves as a coordination point for L-methionine.

It belongs to the AdoMet synthase family. Homotetramer; dimer of dimers. It depends on Mg(2+) as a cofactor. The cofactor is K(+).

It is found in the cytoplasm. The enzyme catalyses L-methionine + ATP + H2O = S-adenosyl-L-methionine + phosphate + diphosphate. It functions in the pathway amino-acid biosynthesis; S-adenosyl-L-methionine biosynthesis; S-adenosyl-L-methionine from L-methionine: step 1/1. Functionally, catalyzes the formation of S-adenosylmethionine (AdoMet) from methionine and ATP. The overall synthetic reaction is composed of two sequential steps, AdoMet formation and the subsequent tripolyphosphate hydrolysis which occurs prior to release of AdoMet from the enzyme. The polypeptide is S-adenosylmethionine synthase (Teredinibacter turnerae (strain ATCC 39867 / T7901)).